A 512-amino-acid chain; its full sequence is ATP synthase subunit alpha, chloroplastic (512 aa).

Position 170 to 177 (170 to 177 (GDRQTGKT)) interacts with ATP.

Belongs to the ATPase alpha/beta chains family. In terms of assembly, F-type ATPases have 2 components, CF(1) - the catalytic core - and CF(0) - the membrane proton channel. CF(1) has five subunits: alpha(3), beta(3), gamma(1), delta(1), epsilon(1). CF(0) has four main subunits: a, b, b' and c.

It is found in the plastid. The protein resides in the chloroplast thylakoid membrane. The enzyme catalyses ATP + H2O + 4 H(+)(in) = ADP + phosphate + 5 H(+)(out). Its function is as follows. Produces ATP from ADP in the presence of a proton gradient across the membrane. The alpha chain is a regulatory subunit. The protein is ATP synthase subunit alpha, chloroplastic of Staurastrum punctulatum (Green alga).